Consider the following 233-residue polypeptide: Large ribosomal subunit protein uL1 (233 aa).

Belongs to the universal ribosomal protein uL1 family. Part of the 50S ribosomal subunit.

Its function is as follows. Binds directly to 23S rRNA. The L1 stalk is quite mobile in the ribosome, and is involved in E site tRNA release. In terms of biological role, protein L1 is also a translational repressor protein, it controls the translation of the L11 operon by binding to its mRNA. This Geobacillus stearothermophilus (Bacillus stearothermophilus) protein is Large ribosomal subunit protein uL1.